Reading from the N-terminus, the 364-residue chain is Oxidized low-density lipoprotein receptor 1 (364 aa).

A disordered region spans residues 1 to 21 (MAFDDKMKPVNGQPDQKSCGK). Residues 1-31 (MAFDDKMKPVNGQPDQKSCGKKPKGLHLLSS) are Cytoplasmic-facing. A helical; Signal-anchor for type II membrane protein membrane pass occupies residues 32–54 (TWWCPAAVTLAILCLVLSVTLIV). 2 S-palmitoyl cysteine lipidation sites follow: cysteine 35 and cysteine 45. Residues 55 to 242 (QQTQLLQVSD…GPCPQDWIWH (188 aa)) are neck. The Extracellular portion of the chain corresponds to 55–364 (QQTQLLQVSD…QKKANLLLTQ (310 aa)). Residues asparagine 72, asparagine 92, and asparagine 138 are each glycosylated (N-linked (GlcNAc...) asparagine). The stretch at 83–233 (QMSAQKKAEN…ALQRAANSSG (151 aa)) forms a coiled coil. 3 tandem repeats follow at residues 96–141 (ESKR…NASE), 142–187 (ESKW…KYSE), and 188–233 (ESQR…NSSG). Cystine bridges form between cysteine 235–cysteine 246, cysteine 262–cysteine 354, and cysteine 333–cysteine 346. Residues 242 to 355 (HKENCYLFHG…CILTAFSICQ (114 aa)) enclose the C-type lectin domain.

In terms of assembly, homodimer; disulfide-linked. May form a hexamer composed of 3 homodimers. Interacts with HSP70. N-glycosylated. In terms of tissue distribution, predominantly expressed in lung and at lower level in kidney. Expressed in macrophages but not in vascular smooth muscle cells.

The protein resides in the cell membrane. It is found in the membrane raft. The protein localises to the secreted. Its function is as follows. Receptor that mediates the recognition, internalization and degradation of oxidatively modified low density lipoprotein (oxLDL) by vascular endothelial cells. OxLDL is a marker of atherosclerosis that induces vascular endothelial cell activation and dysfunction, resulting in pro-inflammatory responses, pro-oxidative conditions and apoptosis. Its association with oxLDL induces the activation of NF-kappa-B through an increased production of intracellular reactive oxygen and a variety of pro-atherogenic cellular responses including a reduction of nitric oxide (NO) release, monocyte adhesion and apoptosis. In addition to binding oxLDL, it acts as a receptor for the HSP70 protein involved in antigen cross-presentation to naive T-cells in dendritic cells, thereby participating in cell-mediated antigen cross-presentation. Also involved in inflammatory process, by acting as a leukocyte-adhesion molecule at the vascular interface in endotoxin-induced inflammation. Also acts as a receptor for advanced glycation end (AGE) products, activated platelets, monocytes, apoptotic cells and both Gram-negative and Gram-positive bacteria. The sequence is that of Oxidized low-density lipoprotein receptor 1 (Olr1) from Rattus norvegicus (Rat).